The primary structure comprises 574 residues: Proline--tRNA ligase (574 aa).

This sequence belongs to the class-II aminoacyl-tRNA synthetase family. ProS type 1 subfamily. As to quaternary structure, homodimer.

It localises to the cytoplasm. It carries out the reaction tRNA(Pro) + L-proline + ATP = L-prolyl-tRNA(Pro) + AMP + diphosphate. Catalyzes the attachment of proline to tRNA(Pro) in a two-step reaction: proline is first activated by ATP to form Pro-AMP and then transferred to the acceptor end of tRNA(Pro). As ProRS can inadvertently accommodate and process non-cognate amino acids such as alanine and cysteine, to avoid such errors it has two additional distinct editing activities against alanine. One activity is designated as 'pretransfer' editing and involves the tRNA(Pro)-independent hydrolysis of activated Ala-AMP. The other activity is designated 'posttransfer' editing and involves deacylation of mischarged Ala-tRNA(Pro). The misacylated Cys-tRNA(Pro) is not edited by ProRS. This is Proline--tRNA ligase from Marinomonas sp. (strain MWYL1).